Reading from the N-terminus, the 77-residue chain is Conotoxin ArMKLT2-0122 (77 aa).

Positions 1–22 (MKLTCVLIVAVLFLTACQLIAA) are cleaved as a signal peptide. A propeptide spanning residues 23-44 (DDSRDLKRFSRRKMRDGMLNTK) is cleaved from the precursor. 3 disulfides stabilise this stretch: C50-C65, C57-C68, and C64-C73.

This sequence belongs to the conotoxin O1 superfamily. In terms of tissue distribution, expressed by the venom duct.

Its subcellular location is the secreted. The protein is Conotoxin ArMKLT2-0122 of Conus arenatus (Sand-dusted cone).